We begin with the raw amino-acid sequence, 494 residues long: MALGGAFSIFMTLCLSCLLILIAWKRTSRGGKLPPGPTPIPFLGNLLQVRIDATFQSFLKLQKKYGSVFTVYFGPRPVVILCGHEAVKEALVDQADDFSGRGEMPTLEKNFQGYGLALSNGERWKILRRFSLTVLRNFGMGKRSIEERIQEEAGYLLEELHKVKGAPIDPTFYLSRTVSNVICSVVFGKRFDYEDQRFRSLMKMINESFVEMSMPWAQLYDMYWGVIQYFPGRHNRLYNLIEELKDFIASRVKINEASFDPSNPRDFIDCFLIKMYQDKSDPHSEFNLKNLVLTTLNLFFAGTETVSSTLRYGFLLLMKYPEVEAKIHEEINQVIGTHRTPRVDDRAKMPYTDAVIHEIQRLTDIVPLGVPHNVIRDTHFRGYFLPKGTDVYPLIGSVLKDPKYFRYPEAFYPQHFLDEQGRFKKNDAFVAFSSGKRICVGEALARMELFLYFTSILQRFSLRSLVPPADIDIAHKISGFGNIPPTYELCFMAR.

Cys439 serves as a coordination point for heme.

The protein belongs to the cytochrome P450 family. The cofactor is heme. As to expression, olfactory epithelium.

The protein localises to the endoplasmic reticulum membrane. It localises to the microsome membrane. The catalysed reaction is an organic molecule + reduced [NADPH--hemoprotein reductase] + O2 = an alcohol + oxidized [NADPH--hemoprotein reductase] + H2O + H(+). Its function is as follows. Cytochromes P450 are a group of heme-thiolate monooxygenases. This isozyme seems to be implicated in olfaction. This Rattus norvegicus (Rat) protein is Cytochrome P450 2G1 (Cyp2g1).